We begin with the raw amino-acid sequence, 236 residues long: Concanavalin-Ma (236 aa).

Mn(2+)-binding residues include Glu8 and Asp10. 4 residues coordinate Ca(2+): Asp10, Tyr12, Asn14, and Asp19. Tyr12 lines the a carbohydrate pocket. Mn(2+)-binding residues include Asp19 and His24. Leu98 to Tyr99 serves as a coordination point for a carbohydrate. Asp207 is a Ca(2+) binding site. Residue Arg227 coordinates a carbohydrate.

Belongs to the leguminous lectin family. As to quaternary structure, homotetramer.

In terms of biological role, glucose/D-mannose specific lectin. This chain is Concanavalin-Ma, found in Canavalia rosea (Beach bean).